The following is a 422-amino-acid chain: 5'-deoxyadenosine deaminase (422 aa).

Zn(2+) contacts are provided by histidine 57 and histidine 59. Glutamate 86 and histidine 178 together coordinate substrate. Zn(2+) is bound at residue histidine 205. Substrate-binding residues include glutamate 208 and aspartate 294. Aspartate 294 contributes to the Zn(2+) binding site.

It belongs to the metallo-dependent hydrolases superfamily. MTA/SAH deaminase family. Homotetramer. The cofactor is Zn(2+).

The enzyme catalyses 5'-deoxyadenosine + H2O + H(+) = 5'-deoxyinosine + NH4(+). It carries out the reaction S-adenosyl-L-homocysteine + H2O + H(+) = S-inosyl-L-homocysteine + NH4(+). The catalysed reaction is S-methyl-5'-thioadenosine + H2O + H(+) = S-methyl-5'-thioinosine + NH4(+). It catalyses the reaction adenosine + H2O + H(+) = inosine + NH4(+). It participates in amino-acid biosynthesis; S-adenosyl-L-methionine biosynthesis. Catalyzes the deamination of three SAM-derived enzymatic products, namely 5'-deoxyadenosine, S-adenosyl-L-homocysteine, and 5'-methylthioadenosine, to produce the inosine analogs. Can also deaminate adenosine. The preferred substrate for this enzyme is 5'-deoxyadenosine, but all these substrates are efficiently deaminated. Likely functions in a S-adenosyl-L-methionine (SAM) recycling pathway from S-adenosyl-L-homocysteine (SAH) produced from SAM-dependent methylation reactions. May also be involved in the recycling of 5'-deoxyadenosine, whereupon the 5'-deoxyribose moiety of 5'-deoxyinosine is further metabolized to deoxyhexoses used for the biosynthesis of aromatic amino acids in methanogens. The protein is 5'-deoxyadenosine deaminase of Methanococcus maripaludis (strain DSM 14266 / JCM 13030 / NBRC 101832 / S2 / LL).